Consider the following 146-residue polypeptide: Large ribosomal subunit protein bL21 (146 aa).

A disordered region spans residues 96–146 (KKKTRRKMGHRQELTRVMVKSISITNSTPKTSSKTEVKKKSTSPKASNPEN).

This sequence belongs to the bacterial ribosomal protein bL21 family. In terms of assembly, part of the 50S ribosomal subunit. Contacts protein L20.

Functionally, this protein binds to 23S rRNA in the presence of protein L20. This Prochlorococcus marinus subsp. pastoris (strain CCMP1986 / NIES-2087 / MED4) protein is Large ribosomal subunit protein bL21.